A 490-amino-acid chain; its full sequence is MGIRVRYAPSPTGLQHIGGIRTALFNYFFAKSCGGKFLLRIEDTDQSRYFSEAENDLYSSLKWLGISFDEGPVVGGDYAPYVQSQRSAIYKRYAEYLIESGHAYYCYCSPERLERIKKIQNINKMPPGYDRHCRNLSDEEIENVLIKKIKPVVRFKIPLEGDTSFDDVLLGKITWSNKDISPDPVILKSDGLPTYHLANVVDDYLMKITHVLRAQEWVSSGPLHTLLYKAFKWNPPIYCHLPMVMGNDGQKLSKRHGSTALRQFIEDGYLPEAIINYITLLGWSYDDKREFFSKSDLEKFFSIEKINKSPAIFDYHKLDFFNSYYIREKKDEDLFNLLLPFFQKKGYVSKPNTLEESQKLKLLVPLIKSRIKKLSDALSMTKFFYEDIKSWNLDEFLGRKKTAKEVCSILELIKPILEGFEKRSLEENDKIFYDFAKNNGFKLGEILLPIRIAVLGSKVSPPLFDSLKLIGKSKVFERNKLAQEFLRINE.

Residues 9–19 carry the 'HIGH' region motif; the sequence is PSPTGLQHIGG. A 'KMSKS' region motif is present at residues 251–255; it reads KLSKR. K254 is a binding site for ATP.

It belongs to the class-I aminoacyl-tRNA synthetase family. Glutamate--tRNA ligase type 1 subfamily. As to quaternary structure, monomer.

Its subcellular location is the cytoplasm. It carries out the reaction tRNA(Glu) + L-glutamate + ATP = L-glutamyl-tRNA(Glu) + AMP + diphosphate. Functionally, catalyzes the attachment of glutamate to tRNA(Glu) in a two-step reaction: glutamate is first activated by ATP to form Glu-AMP and then transferred to the acceptor end of tRNA(Glu). The protein is Glutamate--tRNA ligase of Borreliella afzelii (strain PKo) (Borrelia afzelii).